We begin with the raw amino-acid sequence, 185 residues long: Adenine phosphoribosyltransferase (185 aa).

It belongs to the purine/pyrimidine phosphoribosyltransferase family. Homodimer.

The protein localises to the cytoplasm. The enzyme catalyses AMP + diphosphate = 5-phospho-alpha-D-ribose 1-diphosphate + adenine. It participates in purine metabolism; AMP biosynthesis via salvage pathway; AMP from adenine: step 1/1. Functionally, catalyzes a salvage reaction resulting in the formation of AMP, that is energically less costly than de novo synthesis. The polypeptide is Adenine phosphoribosyltransferase (Rubrobacter xylanophilus (strain DSM 9941 / JCM 11954 / NBRC 16129 / PRD-1)).